Consider the following 225-residue polypeptide: Elongation factor 1-beta (225 aa).

In terms of domain architecture, GST C-terminal spans 2–84 (GFGDLKSPAG…ALGKYGPADV (83 aa)). K7 is modified (N6-acetyllysine). 2 positions are modified to phosphoserine: S8 and S42. The interval 78-115 (KYGPADVEDTTGSGATDSKDDDDIDLFGSDDEEESEEA) is disordered. T88 and T93 each carry phosphothreonine. Phosphoserine occurs at positions 95 and 106. Over residues 96–113 (KDDDDIDLFGSDDEEESE) the composition is skewed to acidic residues. Residue K147 forms a Glycyl lysine isopeptide (Lys-Gly) (interchain with G-Cter in SUMO2) linkage. At S174 the chain carries Phosphoserine.

Belongs to the EF-1-beta/EF-1-delta family. In terms of assembly, EF-1 is composed of 4 subunits: alpha, beta (alpha subunit of the eEF1B subcomplex), delta (beta subunit of the eEF1B subcomplex), and gamma (gamma subunit of the eEF1B subcomplex). Interacts with elongation factor EEF1A1. Post-translationally, phosphorylation affects the GDP/GTP exchange rate.

Its function is as follows. Catalytic subunit of the guanine nucleotide exchange factor (GEF) (eEF1B subcomplex) of the eukaryotic elongation factor 1 complex (eEF1). Stimulates the exchange of GDP for GTP on elongation factor 1A (eEF1A), probably by displacing GDP from the nucleotide binding pocket in eEF1A. This chain is Elongation factor 1-beta (EEF1B2), found in Homo sapiens (Human).